Here is a 139-residue protein sequence, read N- to C-terminus: Two-component response regulator 24 (139 aa).

A Response regulatory domain is found at 19 to 134; the sequence is TALVVDDSFV…KLLSILHKLN (116 aa). Aspartate 69 is subject to 4-aspartylphosphate.

It belongs to the ARR family. Type-A subfamily. In terms of processing, two-component system major event consists of a His-to-Asp phosphorelay between a sensor histidine kinase (HK) and a response regulator (RR). In plants, the His-to-Asp phosphorelay involves an additional intermediate named Histidine-containing phosphotransfer protein (HPt). This multistep phosphorelay consists of a His-Asp-His-Asp sequential transfer of a phosphate group between first a His and an Asp of the HK protein, followed by the transfer to a conserved His of the HPt protein and finally the transfer to an Asp in the receiver domain of the RR protein. In terms of tissue distribution, mostly expressed in flowers and siliques, primarily restricted to pollen grains.

The protein localises to the nucleus. Functions as a response regulator involved in His-to-Asp phosphorelay signal transduction system. Phosphorylation of the Asp residue in the receiver domain activates the ability of the protein to promote the transcription of target genes. Type-A response regulators seem to act as negative regulators of the cytokinin signaling. This Arabidopsis thaliana (Mouse-ear cress) protein is Two-component response regulator 24.